Here is a 725-residue protein sequence, read N- to C-terminus: Peroxisomal fatty acid beta-oxidation multifunctional protein MFP2 (725 aa).

Glutamate 119 functions as the Nucleophile in the catalytic mechanism. Glutamate 139 serves as the catalytic Proton acceptor. The Microbody targeting signal motif lies at 723-725 (SRL).

This sequence in the N-terminal section; belongs to the enoyl-CoA hydratase/isomerase family. The protein in the central section; belongs to the 3-hydroxyacyl-CoA dehydrogenase family. As to expression, highly expressed in senescing leaves and at lower levels in flowers and siliques.

It localises to the glyoxysome. The protein resides in the peroxisome. The catalysed reaction is a (3S)-3-hydroxyacyl-CoA = a (2E)-enoyl-CoA + H2O. The enzyme catalyses a 4-saturated-(3S)-3-hydroxyacyl-CoA = a (3E)-enoyl-CoA + H2O. It carries out the reaction (3S)-3-hydroxybutanoyl-CoA = (2E)-butenoyl-CoA + H2O. It catalyses the reaction (3S)-hydroxyoctanoyl-CoA = (2E)-octenoyl-CoA + H2O. The catalysed reaction is (3S)-3-hydroxydodecanoyl-CoA = (2E)-dodecenoyl-CoA + H2O. The enzyme catalyses (3S)-hydroxytetradecanoyl-CoA = (2E)-tetradecenoyl-CoA + H2O. It carries out the reaction (3S)-hydroxyhexanoyl-CoA = (2E)-hexenoyl-CoA + H2O. It catalyses the reaction a (3Z)-enoyl-CoA = a 4-saturated (2E)-enoyl-CoA. The catalysed reaction is a (3E)-enoyl-CoA = a 4-saturated (2E)-enoyl-CoA. The enzyme catalyses (3S)-3-hydroxybutanoyl-CoA = (3R)-3-hydroxybutanoyl-CoA. It carries out the reaction a (3S)-3-hydroxyacyl-CoA + NAD(+) = a 3-oxoacyl-CoA + NADH + H(+). It catalyses the reaction (3S)-3-hydroxybutanoyl-CoA + NAD(+) = acetoacetyl-CoA + NADH + H(+). The catalysed reaction is (3S)-hydroxyhexanoyl-CoA + NAD(+) = 3-oxohexanoyl-CoA + NADH + H(+). The enzyme catalyses (3S)-hydroxyoctanoyl-CoA + NAD(+) = 3-oxooctanoyl-CoA + NADH + H(+). It carries out the reaction (3S)-3-hydroxydodecanoyl-CoA + NAD(+) = 3-oxododecanoyl-CoA + NADH + H(+). It catalyses the reaction (3S)-hydroxytetradecanoyl-CoA + NAD(+) = 3-oxotetradecanoyl-CoA + NADH + H(+). It participates in lipid metabolism; fatty acid beta-oxidation. Involved in peroxisomal fatty acid beta-oxidation during seed germination. Possesses enoyl-CoA hydratase activity against long chain substrates (C14-C18) and 3-hydroxyacyl-CoA dehydrogenase activity against chains of variable sizes (C6-C18). Possesses 3-hydroxy-3-phenylpropionyl-CoA dehydrogenase activity and is involved in the peroxisomal beta-oxidation pathway for the biosynthesis of benzoic acid (BA). Required for the accumulation in seeds of substituted hydroxybenzoylated choline esters, which are BA-containing secondary metabolites. Fatty acid beta-oxidation pathway in peroxisomes regulates gene silencing, histone acetylation and DNA methylation. The chain is Peroxisomal fatty acid beta-oxidation multifunctional protein MFP2 from Arabidopsis thaliana (Mouse-ear cress).